Consider the following 254-residue polypeptide: Thiazole synthase (254 aa).

The active-site Schiff-base intermediate with DXP is Lys-95. 1-deoxy-D-xylulose 5-phosphate is bound by residues Gly-156, 182–183 (AG), and 204–205 (NT).

It belongs to the ThiG family. As to quaternary structure, homotetramer. Forms heterodimers with either ThiH or ThiS.

The protein localises to the cytoplasm. It catalyses the reaction [ThiS sulfur-carrier protein]-C-terminal-Gly-aminoethanethioate + 2-iminoacetate + 1-deoxy-D-xylulose 5-phosphate = [ThiS sulfur-carrier protein]-C-terminal Gly-Gly + 2-[(2R,5Z)-2-carboxy-4-methylthiazol-5(2H)-ylidene]ethyl phosphate + 2 H2O + H(+). Its pathway is cofactor biosynthesis; thiamine diphosphate biosynthesis. In terms of biological role, catalyzes the rearrangement of 1-deoxy-D-xylulose 5-phosphate (DXP) to produce the thiazole phosphate moiety of thiamine. Sulfur is provided by the thiocarboxylate moiety of the carrier protein ThiS. In vitro, sulfur can be provided by H(2)S. This chain is Thiazole synthase, found in Shewanella baltica (strain OS195).